The sequence spans 117 residues: Large ribosomal subunit protein bL20c (117 aa).

Belongs to the bacterial ribosomal protein bL20 family.

The protein resides in the plastid. Its subcellular location is the chloroplast. In terms of biological role, binds directly to 23S ribosomal RNA and is necessary for the in vitro assembly process of the 50S ribosomal subunit. It is not involved in the protein synthesizing functions of that subunit. In Drimys granadensis, this protein is Large ribosomal subunit protein bL20c.